The following is a 435-amino-acid chain: MNFRDNSNIEYRKLDAPLKFINKNYITIGDKDREKYSKILADILEAFRRKMAESDEVYKTFEGAVHYTGSAYDKVKVGKPDEFDLNIVMKLPAAWDYHNDIEVKNSSPSYVTINVKSGCERSYRDPSFLNKYQKGIRIWTDNEGYFIQEQFHAWMEGVVKKALNKFPSHGLEYIIQTNGHAIYVKTKKSGPAVTLQCESQDRKIKIDVDLVPVIQFNNNSSTLWLSPPVRQRPLLCCKKTWCAVPKPKKNNGFTNKNREWRVSFTDQERDLLYNKGRIKNLIRQIKKLKSVHEETKSLPSYYVKTIFLWALDDKSLDQNMWTQWSDGALFMFMLKRLHSHLDENKIPYYWDSRCNLLDALGYAVNNMKYKIQRIIKEIDNSLDNPEVLAKYLLTADEFADFRRRYGSIEEGFESLSIDSAPPVSDLRGDSRCCIL.

Residues serine 70 and 82–84 (EFD) contribute to the ATP site. Positions 82, 84, and 209 each coordinate Mg(2+). Aspartate 209 serves as a coordination point for GTP. ATP contacts are provided by residues lysine 286 and 300-304 (SYYVK). Residues leucine 311, aspartate 312, and aspartate 317 each coordinate Mn(2+).

The protein belongs to the mab-21 family. Mg(2+) is required as a cofactor. The cofactor is Mn(2+).

The catalysed reaction is GTP + ATP = 2',3'-cGAMP + 2 diphosphate. It catalyses the reaction GTP + ATP = pppGp(2'-5')A + diphosphate. The enzyme catalyses pppGp(2'-5')A = 2',3'-cGAMP + diphosphate. Nucleotidyltransferase that catalyzes the formation of cyclic GMP-AMP (2',3'-cGAMP) from ATP and GTP and plays a key role in innate immunity. Directly binds some unknown ligand, activating the nucleotidyltransferase activity, leading to synthesis of 2',3'-cGAMP, a second messenger that binds to and activates Sting, thereby triggering the immune response via activation of the NF-kappa-B transcription factor. This chain is Cyclic GMP-AMP synthase-like receptor, found in Ctenocephalides felis (Cat flea).